We begin with the raw amino-acid sequence, 457 residues long: Multidrug resistance protein MdtK (457 aa).

12 helical membrane passes run 11-31, 53-73, 93-113, 127-147, 160-180, 191-211, 243-263, 276-296, 316-336, 357-377, 387-407, and 418-438; these read LLALAIPVILAQVAQTAMGFV, IWLPAILFGHGLLLALTPVVA, WLAGFVSVLIMVVLWNAGYII, AVGYLRALLWGAPGYLFFQVA, GMVMGFIGLLVNIPVNYIFIY, VGCGVATASVYWVMFASMLWW, LPIALALFFEVTLFAVVALLV, IALNFSSLMFVLPLSLAAAVT, RTGVGVGVCLAVFTAIFTVLM, LMLLAAIYQISDSIQVIGSGI, IFFITFTAYWVLGLPSGYLLA, and PAGFWCGFIIGLTSAAIMMML.

This sequence belongs to the multi antimicrobial extrusion (MATE) (TC 2.A.66.1) family. MdtK subfamily.

It localises to the cell inner membrane. Multidrug efflux pump that functions probably as a Na(+)/drug antiporter. In Klebsiella pneumoniae subsp. pneumoniae (strain ATCC 700721 / MGH 78578), this protein is Multidrug resistance protein MdtK.